The chain runs to 329 residues: GTP 3',8-cyclase (329 aa).

The Radical SAM core domain maps to 8-234; the sequence is AFARKFYYLR…QLRQRSDGPA (227 aa). A GTP-binding site is contributed by R17. [4Fe-4S] cluster contacts are provided by C24 and C28. Y30 lines the S-adenosyl-L-methionine pocket. C31 serves as a coordination point for [4Fe-4S] cluster. R68 provides a ligand contact to GTP. G72 is a binding site for S-adenosyl-L-methionine. T99 serves as a coordination point for GTP. S123 is an S-adenosyl-L-methionine binding site. Residue K160 coordinates GTP. M194 contacts S-adenosyl-L-methionine. [4Fe-4S] cluster is bound by residues C257 and C260. 262 to 264 contributes to the GTP binding site; that stretch reads RLR. A [4Fe-4S] cluster-binding site is contributed by C274.

It belongs to the radical SAM superfamily. MoaA family. In terms of assembly, monomer and homodimer. Requires [4Fe-4S] cluster as cofactor.

The catalysed reaction is GTP + AH2 + S-adenosyl-L-methionine = (8S)-3',8-cyclo-7,8-dihydroguanosine 5'-triphosphate + 5'-deoxyadenosine + L-methionine + A + H(+). It functions in the pathway cofactor biosynthesis; molybdopterin biosynthesis. In terms of biological role, catalyzes the cyclization of GTP to (8S)-3',8-cyclo-7,8-dihydroguanosine 5'-triphosphate. This chain is GTP 3',8-cyclase, found in Escherichia fergusonii (strain ATCC 35469 / DSM 13698 / CCUG 18766 / IAM 14443 / JCM 21226 / LMG 7866 / NBRC 102419 / NCTC 12128 / CDC 0568-73).